The primary structure comprises 377 residues: uncharacterized protein (377 aa).

2 stretches are compositionally biased toward polar residues: residues 1–11 (MSSIQGTSGSS) and 31–43 (PSGQTISFSAVGK). Disordered regions lie at residues 1 to 43 (MSSI…AVGK), 109 to 141 (SSEEQLESPGVRNKSALKGTNRSNSHREEIARN), and 328 to 377 (SSSP…RGFQ). The segment covering 334–345 (EDPRSLRDRLRD) has biased composition (basic and acidic residues).

The protein belongs to the chlamydial CPn_0499/CT_392/TC_0671 family.

This is an uncharacterized protein from Chlamydia trachomatis serovar D (strain ATCC VR-885 / DSM 19411 / UW-3/Cx).